The primary structure comprises 313 residues: 1-phosphofructokinase (313 aa).

ATP contacts are provided by residues 222–227 and 254–255; these read SMGAKG and GD. Asp255 (proton acceptor) is an active-site residue.

The protein belongs to the carbohydrate kinase PfkB family.

The catalysed reaction is beta-D-fructose 1-phosphate + ATP = beta-D-fructose 1,6-bisphosphate + ADP + H(+). Its function is as follows. Catalyzes the ATP-dependent phosphorylation of fructose-l-phosphate to fructose-l,6-bisphosphate. This is 1-phosphofructokinase (fruK) from Haemophilus influenzae (strain ATCC 51907 / DSM 11121 / KW20 / Rd).